Consider the following 184-residue polypeptide: Alpha-tubulin N-acetyltransferase (184 aa).

An N-acetyltransferase domain is found at M1–F170. Acetyl-CoA contacts are provided by residues F104–I117 and S140–K149.

This sequence belongs to the acetyltransferase ATAT1 family.

It carries out the reaction L-lysyl-[alpha-tubulin] + acetyl-CoA = N(6)-acetyl-L-lysyl-[alpha-tubulin] + CoA + H(+). Functionally, specifically acetylates 'Lys-40' in alpha-tubulin on the lumenal side of microtubules. Promotes microtubule destabilization and accelerates microtubule dynamics; this activity may be independent of acetylation activity. Acetylates alpha-tubulin with a slow enzymatic rate, due to a catalytic site that is not optimized for acetyl transfer. Enters the microtubule through each end and diffuses quickly throughout the lumen of microtubules. Acetylates only long/old microtubules because of its slow acetylation rate since it does not have time to act on dynamically unstable microtubules before the enzyme is released. The chain is Alpha-tubulin N-acetyltransferase from Plasmodium falciparum (isolate 3D7).